The following is a 370-amino-acid chain: UDP-N-acetylglucosamine--N-acetylmuramyl-(pentapeptide) pyrophosphoryl-undecaprenol N-acetylglucosamine transferase (370 aa).

UDP-N-acetyl-alpha-D-glucosamine contacts are provided by residues 15 to 17, asparagine 129, arginine 170, serine 200, isoleucine 253, and glutamine 298; that span reads TGG.

Belongs to the glycosyltransferase 28 family. MurG subfamily.

The protein localises to the cell inner membrane. The catalysed reaction is di-trans,octa-cis-undecaprenyl diphospho-N-acetyl-alpha-D-muramoyl-L-alanyl-D-glutamyl-meso-2,6-diaminopimeloyl-D-alanyl-D-alanine + UDP-N-acetyl-alpha-D-glucosamine = di-trans,octa-cis-undecaprenyl diphospho-[N-acetyl-alpha-D-glucosaminyl-(1-&gt;4)]-N-acetyl-alpha-D-muramoyl-L-alanyl-D-glutamyl-meso-2,6-diaminopimeloyl-D-alanyl-D-alanine + UDP + H(+). The protein operates within cell wall biogenesis; peptidoglycan biosynthesis. Cell wall formation. Catalyzes the transfer of a GlcNAc subunit on undecaprenyl-pyrophosphoryl-MurNAc-pentapeptide (lipid intermediate I) to form undecaprenyl-pyrophosphoryl-MurNAc-(pentapeptide)GlcNAc (lipid intermediate II). This chain is UDP-N-acetylglucosamine--N-acetylmuramyl-(pentapeptide) pyrophosphoryl-undecaprenol N-acetylglucosamine transferase, found in Salinibacter ruber (strain DSM 13855 / M31).